The chain runs to 330 residues: ADP-L-glycero-D-manno-heptose-6-epimerase (330 aa).

Residues 11–12 (FI), 32–33 (DN), lysine 39, lysine 54, 75–79 (EGACS), and asparagine 92 contribute to the NADP(+) site. Tyrosine 139 acts as the Proton acceptor in catalysis. Position 143 (lysine 143) interacts with NADP(+). Asparagine 168 lines the substrate pocket. Residues valine 169 and lysine 177 each coordinate NADP(+). Catalysis depends on lysine 177, which acts as the Proton acceptor. Residues arginine 179, histidine 186, 200 to 203 (FGEY), arginine 213, and tyrosine 292 each bind substrate.

The protein belongs to the NAD(P)-dependent epimerase/dehydratase family. HldD subfamily. In terms of assembly, homopentamer. NADP(+) serves as cofactor.

The catalysed reaction is ADP-D-glycero-beta-D-manno-heptose = ADP-L-glycero-beta-D-manno-heptose. The protein operates within nucleotide-sugar biosynthesis; ADP-L-glycero-beta-D-manno-heptose biosynthesis; ADP-L-glycero-beta-D-manno-heptose from D-glycero-beta-D-manno-heptose 7-phosphate: step 4/4. In terms of biological role, catalyzes the interconversion between ADP-D-glycero-beta-D-manno-heptose and ADP-L-glycero-beta-D-manno-heptose via an epimerization at carbon 6 of the heptose. In Burkholderia ambifaria (strain ATCC BAA-244 / DSM 16087 / CCUG 44356 / LMG 19182 / AMMD) (Burkholderia cepacia (strain AMMD)), this protein is ADP-L-glycero-D-manno-heptose-6-epimerase.